A 274-amino-acid polypeptide reads, in one-letter code: Large ribosomal subunit protein uL2cz (274 aa).

Disordered stretches follow at residues 1–25 (MAIH…VKSN) and 224–274 (NPVD…RRSK). A compositionally biased stretch (polar residues) spans 7 to 25 (KTSTPSTRNGTVDSQVKSN).

The protein belongs to the universal ribosomal protein uL2 family. Part of the 50S ribosomal subunit.

The protein localises to the plastid. It is found in the chloroplast. In Coffea arabica (Arabian coffee), this protein is Large ribosomal subunit protein uL2cz (rpl2-A).